The sequence spans 256 residues: Cysteine-rich repeat secretory protein 42 (256 aa).

The N-terminal stretch at 1-26 (MSSVFGSVHILAMIAIQLLLTHSVSS) is a signal peptide. Gnk2-homologous domains lie at 33-136 (YLHH…SVAS) and 142-253 (YEND…LYPF).

This sequence belongs to the cysteine-rich repeat secretory protein family.

The protein resides in the secreted. In Arabidopsis thaliana (Mouse-ear cress), this protein is Cysteine-rich repeat secretory protein 42 (CRRSP42).